We begin with the raw amino-acid sequence, 376 residues long: D-alanine--D-alanine ligase (376 aa).

Residues 155 to 361 form the ATP-grasp domain; the sequence is KIIFEKAGIP…YPELIEKLID (207 aa). ATP is bound at residue 188–243; it reads EEKFSYPVFVKPSNAGSSVGVSKAHDKNELKEALIYAARYDRKVLIEEFINGREVE. Mg(2+) is bound by residues aspartate 314, glutamate 328, and asparagine 330.

The protein belongs to the D-alanine--D-alanine ligase family. Mg(2+) is required as a cofactor. The cofactor is Mn(2+).

The protein resides in the cytoplasm. It catalyses the reaction 2 D-alanine + ATP = D-alanyl-D-alanine + ADP + phosphate + H(+). Its pathway is cell wall biogenesis; peptidoglycan biosynthesis. In terms of biological role, cell wall formation. This Acetivibrio thermocellus (strain ATCC 27405 / DSM 1237 / JCM 9322 / NBRC 103400 / NCIMB 10682 / NRRL B-4536 / VPI 7372) (Clostridium thermocellum) protein is D-alanine--D-alanine ligase.